The following is a 184-amino-acid chain: GTP cyclohydrolase 1 (184 aa).

Residues C75, H78, and C146 each coordinate Zn(2+).

Belongs to the GTP cyclohydrolase I family. As to quaternary structure, homomer.

The enzyme catalyses GTP + H2O = 7,8-dihydroneopterin 3'-triphosphate + formate + H(+). The protein operates within cofactor biosynthesis; 7,8-dihydroneopterin triphosphate biosynthesis; 7,8-dihydroneopterin triphosphate from GTP: step 1/1. In Teredinibacter turnerae (strain ATCC 39867 / T7901), this protein is GTP cyclohydrolase 1.